The chain runs to 131 residues: Large ribosomal subunit protein bL19 (131 aa).

It belongs to the bacterial ribosomal protein bL19 family.

In terms of biological role, this protein is located at the 30S-50S ribosomal subunit interface and may play a role in the structure and function of the aminoacyl-tRNA binding site. This is Large ribosomal subunit protein bL19 from Rhodopseudomonas palustris (strain BisA53).